Reading from the N-terminus, the 160-residue chain is Transcription elongation factor GreA (160 aa).

The stretch at 1–72 (MAEKTYPMTL…QISSLETKIR (72 aa)) forms a coiled coil.

Belongs to the GreA/GreB family.

Functionally, necessary for efficient RNA polymerase transcription elongation past template-encoded arresting sites. The arresting sites in DNA have the property of trapping a certain fraction of elongating RNA polymerases that pass through, resulting in locked ternary complexes. Cleavage of the nascent transcript by cleavage factors such as GreA or GreB allows the resumption of elongation from the new 3'terminus. GreA releases sequences of 2 to 3 nucleotides. The protein is Transcription elongation factor GreA of Streptococcus pneumoniae (strain Hungary19A-6).